The sequence spans 213 residues: Octanoyltransferase (213 aa).

One can recognise a BPL/LPL catalytic domain in the interval G28–L203. Substrate-binding positions include R66 to H73, S133 to G135, and G146 to A148. C164 (acyl-thioester intermediate) is an active-site residue.

It belongs to the LipB family.

It is found in the cytoplasm. It carries out the reaction octanoyl-[ACP] + L-lysyl-[protein] = N(6)-octanoyl-L-lysyl-[protein] + holo-[ACP] + H(+). The protein operates within protein modification; protein lipoylation via endogenous pathway; protein N(6)-(lipoyl)lysine from octanoyl-[acyl-carrier-protein]: step 1/2. Catalyzes the transfer of endogenously produced octanoic acid from octanoyl-acyl-carrier-protein onto the lipoyl domains of lipoate-dependent enzymes. Lipoyl-ACP can also act as a substrate although octanoyl-ACP is likely to be the physiological substrate. The polypeptide is Octanoyltransferase (Geobacter metallireducens (strain ATCC 53774 / DSM 7210 / GS-15)).